The primary structure comprises 128 residues: AECKVTVDSTDQMSFNTKAIEIDKSCKTFTVELTHSGSLPKNVMGHNWVLSSAADMPGIASDGMAAGIDKNYLKEGDIRVIAHTKIIGAGEKDSVTFDVSKLAAGTDYAFFCSFPGHISMMKGTVTVK.

The Plastocyanin-like domain occupies 1–128 (AECKVTVDST…SMMKGTVTVK (128 aa)). Cysteine 3 and cysteine 26 form a disulfide bridge. Histidine 46, cysteine 112, histidine 117, and methionine 121 together coordinate Cu cation.

It localises to the periplasm. Transfers electrons from cytochrome c551 to cytochrome oxidase. This is Azurin from Pseudomonas fluorescens biotype A.